The primary structure comprises 205 residues: Small ribosomal subunit protein uS5 (205 aa).

Positions 49–112 constitute an S5 DRBM domain; the sequence is LEDEVLDIAM…TKAKMNLVKV (64 aa).

The protein belongs to the universal ribosomal protein uS5 family. Part of the 30S ribosomal subunit. Contacts protein S4.

With S4 and S12 plays an important role in translational accuracy. In Methanoregula boonei (strain DSM 21154 / JCM 14090 / 6A8), this protein is Small ribosomal subunit protein uS5.